Reading from the N-terminus, the 424-residue chain is SWI/SNF and RSC complexes subunit arp42 (424 aa).

It belongs to the actin family. In terms of assembly, component of the RSC complex composed of at least arp9, arp42, rsc1, rsc4, rsc7, rsc9, rsc58, sfh1, snf21, ssr1, ssr2, ssr3 and ssr4. The complex interacts with histone and histone variant components of centromeric chromatin. Component of the SWI/SNF global transcription activator complex composed of at least arp9, arp42, snf5, snf22, snf30, sbf59, sol1, ssr1, ssr2, ssr3, ssr4 and tfg3.

The protein localises to the cytoplasm. It is found in the nucleus. Its function is as follows. Component of the chromatin structure remodeling complex (RSC), which is involved in transcription regulation and nucleosome positioning. Controls particularly membrane and organelle development genes. Part of the SWI/SNF complex, an ATP-dependent chromatin remodeling complex, required for the positive and negative regulation of gene expression of a large number of genes. It changes chromatin structure by altering DNA-histone contacts within a nucleosome, leading eventually to a change in nucleosome position, thus facilitating or repressing binding of gene-specific transcription factors. The chain is SWI/SNF and RSC complexes subunit arp42 (arp42) from Schizosaccharomyces pombe (strain 972 / ATCC 24843) (Fission yeast).